Reading from the N-terminus, the 290-residue chain is Small ribosomal subunit biogenesis GTPase RsgA (290 aa).

In terms of domain architecture, CP-type G spans S61 to L218. GTP contacts are provided by residues N110–D113 and G161–T169. Residues C243, C248, H250, and C256 each contribute to the Zn(2+) site.

Belongs to the TRAFAC class YlqF/YawG GTPase family. RsgA subfamily. As to quaternary structure, monomer. Associates with 30S ribosomal subunit, binds 16S rRNA. Zn(2+) is required as a cofactor.

It localises to the cytoplasm. Functionally, one of several proteins that assist in the late maturation steps of the functional core of the 30S ribosomal subunit. Helps release RbfA from mature subunits. May play a role in the assembly of ribosomal proteins into the subunit. Circularly permuted GTPase that catalyzes slow GTP hydrolysis, GTPase activity is stimulated by the 30S ribosomal subunit. The polypeptide is Small ribosomal subunit biogenesis GTPase RsgA (Clostridium botulinum (strain Eklund 17B / Type B)).